A 351-amino-acid chain; its full sequence is 4-hydroxy-3-methylbut-2-enyl diphosphate reductase (351 aa).

C18 is a [4Fe-4S] cluster binding site. 2 residues coordinate (2E)-4-hydroxy-3-methylbut-2-enyl diphosphate: H47 and H83. Dimethylallyl diphosphate is bound by residues H47 and H83. Isopentenyl diphosphate contacts are provided by H47 and H83. C105 lines the [4Fe-4S] cluster pocket. (2E)-4-hydroxy-3-methylbut-2-enyl diphosphate is bound at residue H133. Residue H133 coordinates dimethylallyl diphosphate. Isopentenyl diphosphate is bound at residue H133. Residue E135 is the Proton donor of the active site. T174 is a (2E)-4-hydroxy-3-methylbut-2-enyl diphosphate binding site. Residue C204 coordinates [4Fe-4S] cluster. The (2E)-4-hydroxy-3-methylbut-2-enyl diphosphate site is built by S232, S233, N234, and S277. Dimethylallyl diphosphate is bound by residues S232, S233, N234, and S277. The isopentenyl diphosphate site is built by S232, S233, N234, and S277.

The protein belongs to the IspH family. Requires [4Fe-4S] cluster as cofactor.

The catalysed reaction is isopentenyl diphosphate + 2 oxidized [2Fe-2S]-[ferredoxin] + H2O = (2E)-4-hydroxy-3-methylbut-2-enyl diphosphate + 2 reduced [2Fe-2S]-[ferredoxin] + 2 H(+). It catalyses the reaction dimethylallyl diphosphate + 2 oxidized [2Fe-2S]-[ferredoxin] + H2O = (2E)-4-hydroxy-3-methylbut-2-enyl diphosphate + 2 reduced [2Fe-2S]-[ferredoxin] + 2 H(+). The protein operates within isoprenoid biosynthesis; dimethylallyl diphosphate biosynthesis; dimethylallyl diphosphate from (2E)-4-hydroxy-3-methylbutenyl diphosphate: step 1/1. It participates in isoprenoid biosynthesis; isopentenyl diphosphate biosynthesis via DXP pathway; isopentenyl diphosphate from 1-deoxy-D-xylulose 5-phosphate: step 6/6. Its function is as follows. Catalyzes the conversion of 1-hydroxy-2-methyl-2-(E)-butenyl 4-diphosphate (HMBPP) into a mixture of isopentenyl diphosphate (IPP) and dimethylallyl diphosphate (DMAPP). Acts in the terminal step of the DOXP/MEP pathway for isoprenoid precursor biosynthesis. The protein is 4-hydroxy-3-methylbut-2-enyl diphosphate reductase of Bartonella tribocorum (strain CIP 105476 / IBS 506).